The chain runs to 200 residues: Small ribosomal subunit protein uS4 (200 aa).

Residues 22-41 form a disordered region; that stretch reads TGKELQKRPYAPGQHGPNQR. The 61-residue stretch at 92–152 folds into the S4 RNA-binding domain; that stretch reads SRLDNLVYRM…EKSRNLQVIK (61 aa).

The protein belongs to the universal ribosomal protein uS4 family. In terms of assembly, part of the 30S ribosomal subunit. Contacts protein S5. The interaction surface between S4 and S5 is involved in control of translational fidelity.

One of the primary rRNA binding proteins, it binds directly to 16S rRNA where it nucleates assembly of the body of the 30S subunit. Functionally, with S5 and S12 plays an important role in translational accuracy. The chain is Small ribosomal subunit protein uS4 from Halalkalibacterium halodurans (strain ATCC BAA-125 / DSM 18197 / FERM 7344 / JCM 9153 / C-125) (Bacillus halodurans).